Consider the following 130-residue polypeptide: Small ribosomal subunit protein uS8 (130 aa).

It belongs to the universal ribosomal protein uS8 family.

The polypeptide is Small ribosomal subunit protein uS8 (RPS22A) (Eremothecium gossypii (strain ATCC 10895 / CBS 109.51 / FGSC 9923 / NRRL Y-1056) (Yeast)).